A 184-amino-acid chain; its full sequence is MEPSQCVEELEDDVFQPEDGEPVTQPGSLLSADLFAQSLLDCPLSRLQLFPLTHCCGPGLRPTSQEDKATQTLSPASPSQGVMLPCGVTEEPQRLFYGNAGYRLPLPASFPAVLPIGEQPPEGQWQHQAEVQIARKLQCIADQFHRLHVQQHQQNQNRVWWQILLFLHNLALNGEENRNGAGPR.

Residues 67–75 are interaction with DLC2; it reads DKATQTLSP. Positions 133–147 match the BH3 motif; sequence IARKLQCIADQFHRL.

Belongs to the Bcl-2 family. As to quaternary structure, interacts with MCL1, BCL2, BCL2L1/BCL-Xl, BCL2A1 and BCL2L2/BCL-w. Interacts with the myosin V actin motor complex through its binding to DLC2. As to expression, isoform 1 is mainly expressed in B-lymphoid cells. Isoform 2 and isoform 3 are mainly expressed in B-CLL and normal B-cells.

May play a role in apoptosis. Isoform 1 seems to be the main initiator. The chain is Bcl-2-modifying factor (BMF) from Homo sapiens (Human).